The sequence spans 380 residues: Endopolygalacturonase AN8327 (380 aa).

The first 19 residues, 1–19, serve as a signal peptide directing secretion; sequence MFYALGPLALFAFATEVMA. A propeptide spanning residues 20 to 35 is cleaved from the precursor; that stretch reads TPVAYPMTTASPTLAK. Cysteines 39 and 57 form a disulfide. PbH1 repeat units follow at residues 147–169, 170–200, 201–222, 223–243, 252–273, 281–303, and 315–338; these read LTDS…SING, CDGL…DIGE, SSNV…AVNS, GTSI…SIGS, VDTV…RIKA, IKGV…LIEQ, and TSGI…DSDG. The Proton donor role is filled by Asp-215. Cys-217 and Cys-233 are joined by a disulfide. Residue His-237 is part of the active site. The N-linked (GlcNAc...) asparagine glycan is linked to Asn-327. Cys-345 and Cys-350 are disulfide-bonded. An N-linked (GlcNAc...) asparagine glycan is attached at Asn-352. An intrachain disulfide couples Cys-369 to Cys-378.

This sequence belongs to the glycosyl hydrolase 28 family.

The protein localises to the secreted. It carries out the reaction (1,4-alpha-D-galacturonosyl)n+m + H2O = (1,4-alpha-D-galacturonosyl)n + (1,4-alpha-D-galacturonosyl)m.. Functionally, involved in maceration and soft-rotting of plant tissue. Hydrolyzes the 1,4-alpha glycosidic bonds of de-esterified pectate in the smooth region of the plant cell wall. This is Endopolygalacturonase AN8327 from Emericella nidulans (strain FGSC A4 / ATCC 38163 / CBS 112.46 / NRRL 194 / M139) (Aspergillus nidulans).